Consider the following 292-residue polypeptide: uncharacterized protein (292 aa).

Residues 17–37 (SMDMFFFLFIFLLFIYPEMMM) traverse the membrane as a helical segment.

To M.jannaschii MJ0137.

It localises to the membrane. This is an uncharacterized protein from Methanocaldococcus jannaschii (strain ATCC 43067 / DSM 2661 / JAL-1 / JCM 10045 / NBRC 100440) (Methanococcus jannaschii).